The primary structure comprises 318 residues: Protein disulfide-isomerase MPD1 (318 aa).

Residues M1–A21 form the signal peptide. The region spanning Q22–K158 is the Thioredoxin domain. N-linked (GlcNAc...) asparagine glycosylation is present at N47. The cysteines at positions 59 and 62 are disulfide-linked. The N-linked (GlcNAc...) asparagine glycan is linked to N307. Positions H315–L318 match the Prevents secretion from ER motif.

The protein belongs to the protein disulfide isomerase family. Interacts with CNE1 and EPS1.

It localises to the endoplasmic reticulum lumen. It catalyses the reaction Catalyzes the rearrangement of -S-S- bonds in proteins.. In terms of biological role, participates in the folding of proteins containing disulfide bonds. The protein is Protein disulfide-isomerase MPD1 (MPD1) of Saccharomyces cerevisiae (strain ATCC 204508 / S288c) (Baker's yeast).